Reading from the N-terminus, the 295-residue chain is Phosphatidylglycerol--prolipoprotein diacylglyceryl transferase (295 aa).

A run of 7 helical transmembrane segments spans residues 17–37, 57–77, 92–112, 127–147, 196–216, 222–242, and 255–275; these read IKVHWYGIMYLLGFTAAWLLG, LLFYAMLGVVLGGRIGYMLFY, VWDGGMSFHGGLLGVIAACWW, FMAPLVPLGLGFGRIGNFIGA, QLYEALLEGLVMFVVLWAVSA, YLVGGLFALMYGLFRFAVEFV, and WLTRGQILSLPLIAFGLVLLV. R140 serves as a coordination point for a 1,2-diacyl-sn-glycero-3-phospho-(1'-sn-glycerol).

This sequence belongs to the Lgt family.

The protein resides in the cell inner membrane. The catalysed reaction is L-cysteinyl-[prolipoprotein] + a 1,2-diacyl-sn-glycero-3-phospho-(1'-sn-glycerol) = an S-1,2-diacyl-sn-glyceryl-L-cysteinyl-[prolipoprotein] + sn-glycerol 1-phosphate + H(+). The protein operates within protein modification; lipoprotein biosynthesis (diacylglyceryl transfer). Functionally, catalyzes the transfer of the diacylglyceryl group from phosphatidylglycerol to the sulfhydryl group of the N-terminal cysteine of a prolipoprotein, the first step in the formation of mature lipoproteins. The polypeptide is Phosphatidylglycerol--prolipoprotein diacylglyceryl transferase (Stenotrophomonas maltophilia (strain R551-3)).